A 501-amino-acid polypeptide reads, in one-letter code: Histidine--tRNA ligase (501 aa).

Belongs to the class-II aminoacyl-tRNA synthetase family. Homodimer.

Its subcellular location is the cytoplasm. It catalyses the reaction tRNA(His) + L-histidine + ATP = L-histidyl-tRNA(His) + AMP + diphosphate + H(+). This Methylocella silvestris (strain DSM 15510 / CIP 108128 / LMG 27833 / NCIMB 13906 / BL2) protein is Histidine--tRNA ligase.